We begin with the raw amino-acid sequence, 63 residues long: Bowman-birk type proteinase inhibitor 2 (63 aa).

7 disulfide bridges follow: cysteine 7–cysteine 61, cysteine 8–cysteine 23, cysteine 11–cysteine 57, cysteine 13–cysteine 21, cysteine 31–cysteine 38, cysteine 35–cysteine 50, and cysteine 40–cysteine 48.

It belongs to the Bowman-Birk serine protease inhibitor family. As to quaternary structure, exists as a dimer in its native form.

Functionally, inhibits trypsin, chymotrypsin, plasmin and factor XIIa. Does not inhibit factor Xa, thrombin, human plasma kallikrein, porcine pancreatic kallikrein and human urinary kallikrein. This chain is Bowman-birk type proteinase inhibitor 2, found in Amburana cearensis (Cerejeira).